The sequence spans 831 residues: Periplasmic nitrate reductase (831 aa).

Residues 1–29 constitute a signal peptide (tat-type signal); sequence MKVSRRDFIKQTAIAATASVAGIPLGTEA. The 4Fe-4S Mo/W bis-MGD-type domain occupies 41–97; the sequence is LKWSKAPCRFCGTGCGVTVAVRDNKVVATQGDPQCEVNKGLNCVKGYFLSKIMYGQD. The [4Fe-4S] cluster site is built by Cys48, Cys51, Cys55, and Cys83. Residues Lys85, Gln152, Asn177, Cys181, 214–221, 245–249, 264–266, Met375, Gln379, Asn485, 511–512, Lys534, Asp561, and 721–730 each bind Mo-bis(molybdopterin guanine dinucleotide); these read WGSNMAEM, STFTH, QTD, SD, and TGRVLEHWHS. Position 797 (Trp797) interacts with substrate. 2 residues coordinate Mo-bis(molybdopterin guanine dinucleotide): Asn805 and Lys822.

This sequence belongs to the prokaryotic molybdopterin-containing oxidoreductase family. NasA/NapA/NarB subfamily. In terms of assembly, component of the periplasmic nitrate reductase NapAB complex composed of NapA and NapB. It depends on [4Fe-4S] cluster as a cofactor. Requires Mo-bis(molybdopterin guanine dinucleotide) as cofactor. In terms of processing, predicted to be exported by the Tat system. The position of the signal peptide cleavage has not been experimentally proven.

The protein resides in the periplasm. The enzyme catalyses 2 Fe(II)-[cytochrome] + nitrate + 2 H(+) = 2 Fe(III)-[cytochrome] + nitrite + H2O. Its function is as follows. Catalytic subunit of the periplasmic nitrate reductase complex NapAB. Receives electrons from NapB and catalyzes the reduction of nitrate to nitrite. In Cupriavidus pinatubonensis (strain JMP 134 / LMG 1197) (Cupriavidus necator (strain JMP 134)), this protein is Periplasmic nitrate reductase.